The sequence spans 523 residues: Bifunctional purine biosynthesis protein PurH (523 aa).

One can recognise an MGS-like domain in the interval 4–152 (DHIRRPIRRA…KNHPSVAVVT (149 aa)).

The protein belongs to the PurH family.

It carries out the reaction (6R)-10-formyltetrahydrofolate + 5-amino-1-(5-phospho-beta-D-ribosyl)imidazole-4-carboxamide = 5-formamido-1-(5-phospho-D-ribosyl)imidazole-4-carboxamide + (6S)-5,6,7,8-tetrahydrofolate. It catalyses the reaction IMP + H2O = 5-formamido-1-(5-phospho-D-ribosyl)imidazole-4-carboxamide. Its pathway is purine metabolism; IMP biosynthesis via de novo pathway; 5-formamido-1-(5-phospho-D-ribosyl)imidazole-4-carboxamide from 5-amino-1-(5-phospho-D-ribosyl)imidazole-4-carboxamide (10-formyl THF route): step 1/1. It functions in the pathway purine metabolism; IMP biosynthesis via de novo pathway; IMP from 5-formamido-1-(5-phospho-D-ribosyl)imidazole-4-carboxamide: step 1/1. The sequence is that of Bifunctional purine biosynthesis protein PurH from Mycobacterium marinum (strain ATCC BAA-535 / M).